The following is a 1073-amino-acid chain: Activated Cdc42 kinase Ack (1073 aa).

The segment at 88-110 (IGGGKQPSSKKQSSAARESSQGN) is disordered. Residues 123–383 (ITMGLKLGDG…PTFAALKEYL (261 aa)) form the Protein kinase domain. ATP contacts are provided by residues 129–137 (LGDGSFGVV) and Lys156. The active-site Proton acceptor is Asp250. In terms of domain architecture, SH3 spans 386-446 (MSPPVMRASR…PRNLLEQRKV (61 aa)). 3 disordered regions span residues 484 to 506 (QRKC…SSKQ), 803 to 834 (PLKN…VEAA), and 862 to 882 (AQPP…HQQQ). A compositionally biased stretch (low complexity) spans 812–826 (SVHSNHSSPSSTASP). One can recognise a UBA domain in the interval 1029 to 1072 (GLATRHYKIDQLARLGVAGRPQCEQALQQTNWSLEVAAELLLNA).

Belongs to the protein kinase superfamily. Tyr protein kinase family. As to quaternary structure, interacts with yki and ex. Interacts with drk. Likely to be a member of an axonal guidance receptor complex that includes SH3PX1, dock and Dscam. Interacts (via N-terminus) with dock. Interacts with SH3PX1 (via SH3 domain). The cofactor is Mg(2+). Phosphorylated. Autophosphorylated. In terms of tissue distribution, detected in ovaries (at protein level). In adults, relatively higher expression in the head compared to the body.

The protein resides in the cytoplasm. It is found in the cytoplasmic vesicle. The protein localises to the clathrin-coated vesicle. It catalyses the reaction L-tyrosyl-[protein] + ATP = O-phospho-L-tyrosyl-[protein] + ADP + H(+). The enzyme catalyses L-threonyl-[protein] + ATP = O-phospho-L-threonyl-[protein] + ADP + H(+). Its function is as follows. Non-receptor tyrosine-protein and serine/threonine-protein kinase that is implicated in diverse biological functions such as cell survival, cell differentiation, cell growth and proliferation. Phosphorylates SH3PX1 and ex. Phosphorylates SH3PX1 predominantly on 'Tyr-56', which likely promotes the recruitment of SH3PX1 to an axonal guidance receptor complex that includes dock and Dscam; because phosphorylation of SH3PX1 increases its interaction with the complex member dock while decreasing its interaction with the actin cytoskeleton modulator WASp. In the wing and eye, promotes tissue growth, and during embryogenesis coordinates cell shape changes required for correct dorsal closure. Functions in the negative regulation of the Hippo/SWH (Sav/Wts/Hpo) signaling pathway by enhancing yki activity thereby promoting cell proliferation and inhibiting apoptosis. This is accomplished, at least in part, by phosphorylating ex thereby reducing its ability to efficiently activate the Hippo signaling cascade. In the eye disk, wing disk and possibly spermatids, inhibits programmed cell death induced by hid and rpr through a mechanism that is independent of the MAP kinase signal transduction pathway. Essential for male and female fertility. During oogenesis required for the correct temporal assembly, and consequently the catalytic activity of long Ctps filaments (cytoophidium) in the germline nurse cells, likely by phosphorylating an unidentified substrate that is essential for linking individual Ctps filaments into large, catalytically active assemblies. This Drosophila melanogaster (Fruit fly) protein is Activated Cdc42 kinase Ack.